The chain runs to 339 residues: 4-hydroxy-2-oxovalerate aldolase 3 (339 aa).

Residues 7-259 form the Pyruvate carboxyltransferase domain; that stretch reads IRVTDTSLRD…KTGIDFFAIA (253 aa). 15–16 contributes to the substrate binding site; that stretch reads RD. Aspartate 16 contributes to the Mn(2+) binding site. Histidine 19 (proton acceptor) is an active-site residue. Serine 169 and histidine 198 together coordinate substrate. Residues histidine 198 and histidine 200 each contribute to the Mn(2+) site. Position 289 (tyrosine 289) interacts with substrate.

It belongs to the 4-hydroxy-2-oxovalerate aldolase family.

The enzyme catalyses (S)-4-hydroxy-2-oxopentanoate = acetaldehyde + pyruvate. This chain is 4-hydroxy-2-oxovalerate aldolase 3 (hsaF), found in Rhodococcus jostii (strain RHA1).